Here is a 245-residue protein sequence, read N- to C-terminus: Endonuclease III (245 aa).

The HhH domain occupies 119–138 (MDKLVTLPGVGRKTANVILG). 4 residues coordinate [4Fe-4S] cluster: Cys198, Cys205, Cys208, and Cys214.

This sequence belongs to the Nth/MutY family. It depends on [4Fe-4S] cluster as a cofactor.

The enzyme catalyses 2'-deoxyribonucleotide-(2'-deoxyribose 5'-phosphate)-2'-deoxyribonucleotide-DNA = a 3'-end 2'-deoxyribonucleotide-(2,3-dehydro-2,3-deoxyribose 5'-phosphate)-DNA + a 5'-end 5'-phospho-2'-deoxyribonucleoside-DNA + H(+). In terms of biological role, DNA repair enzyme that has both DNA N-glycosylase activity and AP-lyase activity. The DNA N-glycosylase activity releases various damaged pyrimidines from DNA by cleaving the N-glycosidic bond, leaving an AP (apurinic/apyrimidinic) site. The AP-lyase activity cleaves the phosphodiester bond 3' to the AP site by a beta-elimination, leaving a 3'-terminal unsaturated sugar and a product with a terminal 5'-phosphate. Has a preference for oxidized pyrimidines, such as thymine glycol (prefers 5S isomers) 5,6-dihydrouracil:G, 5-hydroxyuracil:G, 5-hydroxycytosine:G and urea:A. Cleaves ssDNA containing an AP site. This is Endonuclease III from Mycobacterium tuberculosis (strain ATCC 25618 / H37Rv).